We begin with the raw amino-acid sequence, 141 residues long: UPF0179 protein Cmaq_1008 (141 aa).

This sequence belongs to the UPF0179 family.

In Caldivirga maquilingensis (strain ATCC 700844 / DSM 13496 / JCM 10307 / IC-167), this protein is UPF0179 protein Cmaq_1008.